Consider the following 93-residue polypeptide: Probable Fe(2+)-trafficking protein (93 aa).

It belongs to the Fe(2+)-trafficking protein family.

In terms of biological role, could be a mediator in iron transactions between iron acquisition and iron-requiring processes, such as synthesis and/or repair of Fe-S clusters in biosynthetic enzymes. The polypeptide is Probable Fe(2+)-trafficking protein (Polaromonas naphthalenivorans (strain CJ2)).